The following is a 596-amino-acid chain: Adenine deaminase (596 aa).

Belongs to the metallo-dependent hydrolases superfamily. Adenine deaminase family. Requires Mn(2+) as cofactor.

The catalysed reaction is adenine + H2O + H(+) = hypoxanthine + NH4(+). The sequence is that of Adenine deaminase from Moorella thermoacetica (strain ATCC 39073 / JCM 9320).